A 137-amino-acid polypeptide reads, in one-letter code: Protein Turandot X (137 aa).

The first 24 residues, 1 to 24 (MKVPVFQLSCLLCLIVCLLCSVKA), serve as a signal peptide directing secretion.

The protein belongs to the Turandot family.

The protein localises to the secreted. Its function is as follows. A humoral factor that may play a role in stress tolerance. This chain is Protein Turandot X, found in Drosophila persimilis (Fruit fly).